Reading from the N-terminus, the 776-residue chain is DExH-box ATP-dependent RNA helicase DExH18, mitochondrial (776 aa).

The transit peptide at 1-84 directs the protein to the mitochondrion; it reads MARGVAGVLR…RSFSSTVDNN (84 aa). Residues 80–101 are disordered; sequence TVDNNGENDDIEESVGSESDDY. A compositionally biased stretch (acidic residues) spans 85 to 101; sequence GENDDIEESVGSESDDY. A Helicase ATP-binding domain is found at 268 to 426; that stretch reads FARAMKRKIV…RFKPLVVEAK (159 aa). 281–288 is a binding site for ATP; that stretch reads GPTNSGKT. The DEIH box; degenerate motif lies at 361–364; that stretch reads DEIQ. Residues 427 to 595 enclose the Helicase C-terminal domain; that stretch reads TLLGELKNVK…LFAAQVPDMA (169 aa).

This sequence belongs to the DExH box helicase family. In terms of assembly, homodimer; in free form. Component of the mitochondrial degradosome (mtEXO) complex which is a heteropentamer containing 2 copies of SUPV3L1 and 3 copies of PNPT1. Mg(2+) is required as a cofactor. The cofactor is Mn(2+).

The protein localises to the nucleus. Its subcellular location is the mitochondrion matrix. The protein resides in the mitochondrion nucleoid. It carries out the reaction ATP + H2O = ADP + phosphate + H(+). In terms of biological role, major helicase player in mitochondrial RNA metabolism. Component of the mitochondrial degradosome (mtEXO) complex, that degrades 3' overhang double-stranded RNA with a 3'-to-5' directionality in an ATP-dependent manner. ATPase and ATP-dependent multisubstrate helicase, able to unwind double-stranded (ds) DNA and RNA, and RNA/DNA heteroduplexes in the 5'-to-3' direction. Plays a role in the RNA surveillance system in mitochondria; regulates the stability of mature mRNAs, the removal of aberrantly formed mRNAs and the rapid degradation of non coding processing intermediates. The sequence is that of DExH-box ATP-dependent RNA helicase DExH18, mitochondrial from Arabidopsis thaliana (Mouse-ear cress).